The chain runs to 586 residues: Ezrin (586 aa).

One can recognise an FERM domain in the interval 2–295 (PKPINVRVTT…GNHELYMRRR (294 aa)). N6-acetyllysine is present on K60. Positions 115-120 (IYCPPE) match the [IL]-x-C-x-x-[DE] motif motif. Y146 bears the Phosphotyrosine; by PDGFR mark. Residues 244 to 586 (EIRNISFNDK…KQRIDEFEAM (343 aa)) are interaction with SCYL3. Positions 302–462 (VQQMKAQARE…QDDLVKTKEE (161 aa)) form a coiled coil. The tract at residues 306-338 (KAQAREEKHQKQLERQQLETEKKRRETVEREKE) is disordered. Positions 308 to 338 (QAREEKHQKQLERQQLETEKKRRETVEREKE) are enriched in basic and acidic residues. At Y354 the chain carries Phosphotyrosine; by PDGFR. Phosphoserine is present on S366. At Y478 the chain carries Phosphotyrosine. The segment at 534-565 (LSNELSQARDENKRTHNDIIHNENMRQGRDKY) is disordered. A Phosphoserine modification is found at S535. A compositionally biased stretch (basic and acidic residues) spans 540-565 (QARDENKRTHNDIIHNENMRQGRDKY). T567 carries the post-translational modification Phosphothreonine; by ROCK2 and PKC/PRKCI.

As to quaternary structure, interacts with PALS1 and NHERF2. Found in a complex with EZR, PODXL and NHERF2. Interacts with MCC, PLEKHG6, PODXL, SCYL3/PACE1, NHERF1 and TMEM8B. Interacts (when phosphorylated) with FES/FPS. Interacts with dimeric S100P, the interaction may be activating through unmasking of F-actin binding sites. Identified in complexes that contain VIM, EZR, AHNAK, BFSP1, BFSP2, ANK2, PLEC, PRX and spectrin. Detected in a complex composed of at least EZR, AHNAK, PPL and PRX. Interacts with PDPN (via cytoplasmic domain); activates RHOA and promotes epithelial-mesenchymal transition. Interacts with SPN/CD43 cytoplasmic tail. Interacts with CD44 and ICAM2. Interacts with SLC9A3; interaction targets SLC9A3 to the apical membrane. Interacts with SLC9A1; regulates interactions of SLC9A1 with cytoskeletal and promotes stress fiber formation. Interacts with CLIC5; may work together in a complex which also includes RDX and MYO6 to stabilize linkages between the plasma membrane and subjacent actin cytoskeleton at the base of stereocilia. In terms of processing, phosphorylated by tyrosine-protein kinases. Phosphorylation by ROCK2 suppresses the head-to-tail association of the N-terminal and C-terminal halves resulting in an opened conformation which is capable of actin and membrane-binding. S-nitrosylation is induced by interferon-gamma and oxidatively-modified low-densitity lipoprotein (LDL(ox)) possibly implicating the iNOS-S100A8/9 transnitrosylase complex. In terms of tissue distribution, detected in eye lens fiber cells. Expressed in cerebrum and cerebellum (at protein level). Component of the microvilli of intestinal epithelial cells.

It is found in the apical cell membrane. The protein resides in the cell projection. The protein localises to the microvillus membrane. It localises to the ruffle membrane. Its subcellular location is the cytoplasm. It is found in the cell cortex. The protein resides in the cytoskeleton. The protein localises to the microvillus. Its activity is regulated as follows. A head-to-tail association, of the N-terminal and C-terminal halves results in a closed conformation (inactive form) which is incapable of actin or membrane-binding. Functionally, probably involved in connections of major cytoskeletal structures to the plasma membrane. In epithelial cells, required for the formation of microvilli and membrane ruffles on the apical pole. Along with PLEKHG6, required for normal macropinocytosis. The protein is Ezrin (Ezr) of Mus musculus (Mouse).